The primary structure comprises 33 residues: Helofensin-1 (33 aa).

This sequence belongs to the beta-defensin family. Helofensin subfamily. In terms of tissue distribution, expressed by the venom gland.

It is found in the secreted. In terms of biological role, lethal toxin which possesses an inhibitory effect on direct electrical stimulation of the isolated hemi-diaphragm. Neither hemorrhagic nor hemolytic activities are detected. Phospholipase A2 activity, proteolytic activity and arginine esterolytic activity are absent. This chain is Helofensin-1, found in Heloderma horridum horridum (Mexican beaded lizard).